Here is a 95-residue protein sequence, read N- to C-terminus: uncharacterized protein (95 aa).

The chain crosses the membrane as a helical span at residues 12–32; the sequence is LASLIVSMVVLVVGLALWFFV. The interval 66-87 is disordered; that stretch reads ANEPEKEAEPATAASEPKEDED.

It is found in the cell membrane. This is an uncharacterized protein from Salmonella typhi.